The following is a 442-amino-acid chain: Putative mannan endo-1,6-alpha-mannosidase C1198.07c (442 aa).

The signal sequence occupies residues 1 to 19; sequence MRYLSFFFEFFFLFSFAFA. At 20–421 the chain is on the lumenal side; sequence FDFDVTSDDS…TPATKSDKGW (402 aa). 7 N-linked (GlcNAc...) asparagine glycosylation sites follow: asparagine 75, asparagine 124, asparagine 193, asparagine 229, asparagine 254, asparagine 257, and asparagine 356. The helical transmembrane segment at 422-442 threads the bilayer; that stretch reads AGFLTFAFSFVFLLFSIWLYF.

Belongs to the glycosyl hydrolase 76 family.

The protein resides in the endoplasmic reticulum membrane. It catalyses the reaction Random hydrolysis of (1-&gt;6)-alpha-D-mannosidic linkages in unbranched (1-&gt;6)-mannans.. This is Putative mannan endo-1,6-alpha-mannosidase C1198.07c from Schizosaccharomyces pombe (strain 972 / ATCC 24843) (Fission yeast).